Here is a 525-residue protein sequence, read N- to C-terminus: COP9 signalosome complex subunit 1b (525 aa).

The PCI domain maps to 298–460; the sequence is HFLNANFDHC…KILFAKEADQ (163 aa).

This sequence belongs to the CSN1 family. As to quaternary structure, component of the CSN complex, probably composed of CSN1b, alien/CSN2, CSN3, CSN4, CSN5, CSN6, CSN7 and CSN8.

It localises to the cytoplasm. It is found in the nucleus. Functionally, essential component of the COP9 signalosome complex (CSN), a complex involved in various cellular and developmental processes. The CSN complex is an essential regulator of the ubiquitin (Ubl) conjugation pathway by mediating the deneddylation of the cullin subunits of the SCF-type E3 ligase complexes, leading to decrease the Ubl ligase activity of SCF. The CSN complex plays an essential role in oogenesis and embryogenesis and is required for proper photoreceptor R cell differentiation and promote lamina glial cell migration or axon targeting. It also promotes Ubl-dependent degradation of cyclin E (CycE) during early oogenesis. This chain is COP9 signalosome complex subunit 1b (CSN1b), found in Drosophila melanogaster (Fruit fly).